Reading from the N-terminus, the 245-residue chain is Biosynthetic peptidoglycan transglycosylase (245 aa).

A helical transmembrane segment spans residues 20–42 (VYAGSVFAGAWLATQLFYLVQIA).

It belongs to the glycosyltransferase 51 family.

Its subcellular location is the cell inner membrane. It carries out the reaction [GlcNAc-(1-&gt;4)-Mur2Ac(oyl-L-Ala-gamma-D-Glu-L-Lys-D-Ala-D-Ala)](n)-di-trans,octa-cis-undecaprenyl diphosphate + beta-D-GlcNAc-(1-&gt;4)-Mur2Ac(oyl-L-Ala-gamma-D-Glu-L-Lys-D-Ala-D-Ala)-di-trans,octa-cis-undecaprenyl diphosphate = [GlcNAc-(1-&gt;4)-Mur2Ac(oyl-L-Ala-gamma-D-Glu-L-Lys-D-Ala-D-Ala)](n+1)-di-trans,octa-cis-undecaprenyl diphosphate + di-trans,octa-cis-undecaprenyl diphosphate + H(+). It functions in the pathway cell wall biogenesis; peptidoglycan biosynthesis. Its function is as follows. Peptidoglycan polymerase that catalyzes glycan chain elongation from lipid-linked precursors. The sequence is that of Biosynthetic peptidoglycan transglycosylase from Burkholderia ambifaria (strain ATCC BAA-244 / DSM 16087 / CCUG 44356 / LMG 19182 / AMMD) (Burkholderia cepacia (strain AMMD)).